Reading from the N-terminus, the 293-residue chain is Phosphatidylserine decarboxylase proenzyme (293 aa).

Catalysis depends on charge relay system; for autoendoproteolytic cleavage activity residues Asp-88, His-144, and Ser-247. The active-site Schiff-base intermediate with substrate; via pyruvic acid; for decarboxylase activity is the Ser-247. Pyruvic acid (Ser); by autocatalysis is present on Ser-247.

It belongs to the phosphatidylserine decarboxylase family. PSD-B subfamily. Prokaryotic type I sub-subfamily. Heterodimer of a large membrane-associated beta subunit and a small pyruvoyl-containing alpha subunit. Pyruvate is required as a cofactor. Post-translationally, is synthesized initially as an inactive proenzyme. Formation of the active enzyme involves a self-maturation process in which the active site pyruvoyl group is generated from an internal serine residue via an autocatalytic post-translational modification. Two non-identical subunits are generated from the proenzyme in this reaction, and the pyruvate is formed at the N-terminus of the alpha chain, which is derived from the carboxyl end of the proenzyme. The autoendoproteolytic cleavage occurs by a canonical serine protease mechanism, in which the side chain hydroxyl group of the serine supplies its oxygen atom to form the C-terminus of the beta chain, while the remainder of the serine residue undergoes an oxidative deamination to produce ammonia and the pyruvoyl prosthetic group on the alpha chain. During this reaction, the Ser that is part of the protease active site of the proenzyme becomes the pyruvoyl prosthetic group, which constitutes an essential element of the active site of the mature decarboxylase.

The protein resides in the cell membrane. The enzyme catalyses a 1,2-diacyl-sn-glycero-3-phospho-L-serine + H(+) = a 1,2-diacyl-sn-glycero-3-phosphoethanolamine + CO2. The protein operates within phospholipid metabolism; phosphatidylethanolamine biosynthesis; phosphatidylethanolamine from CDP-diacylglycerol: step 2/2. Catalyzes the formation of phosphatidylethanolamine (PtdEtn) from phosphatidylserine (PtdSer). The polypeptide is Phosphatidylserine decarboxylase proenzyme (Xylella fastidiosa (strain 9a5c)).